The following is a 250-amino-acid chain: Functional amyloid sbunit FapE (250 aa).

The first 27 residues, 1–27 (MLREHAMYTHHCFVLACCLGAALPAPA), serve as a signal peptide directing secretion.

Belongs to the FapE family. As to quaternary structure, a minor component of purified amyloid fibrils. Fibrils are resistant to boiling in 2% (weight/vol) SDS and require &gt;90% (vol/vol) formic acid to dissolve.

It is found in the fimbrium. It localises to the secreted. A minor component of the functional amyloid in this bacterium. Upon overexpression of the endogenous six-gene locus (fapA-fapF), cells form large clumps during liquid growth, make large amounts of biofilm and produce amyloid fibrils. The polypeptide is Functional amyloid sbunit FapE (Pseudomonas aeruginosa (strain ATCC 15692 / DSM 22644 / CIP 104116 / JCM 14847 / LMG 12228 / 1C / PRS 101 / PAO1)).